The following is a 369-amino-acid chain: 5-amino-6-(D-ribitylamino)uracil--L-tyrosine 4-hydroxyphenyl transferase (369 aa).

In terms of domain architecture, Radical SAM core spans 56 to 292; the sequence is VTFVVNRNIN…AVARLYFGPL (237 aa). [4Fe-4S] cluster is bound by residues Cys-70, Cys-74, and Cys-77.

It belongs to the radical SAM superfamily. CofH family. Consists of two subunits, CofG and CofH. [4Fe-4S] cluster serves as cofactor.

It carries out the reaction 5-amino-6-(D-ribitylamino)uracil + L-tyrosine + S-adenosyl-L-methionine = 5-amino-5-(4-hydroxybenzyl)-6-(D-ribitylimino)-5,6-dihydrouracil + 2-iminoacetate + 5'-deoxyadenosine + L-methionine + H(+). It functions in the pathway cofactor biosynthesis; coenzyme F0 biosynthesis. Its function is as follows. Catalyzes the radical-mediated synthesis of 5-amino-5-(4-hydroxybenzyl)-6-(D-ribitylimino)-5,6-dihydrouracil from 5-amino-6-(D-ribitylamino)uracil and L-tyrosine. The polypeptide is 5-amino-6-(D-ribitylamino)uracil--L-tyrosine 4-hydroxyphenyl transferase (Methanopyrus kandleri (strain AV19 / DSM 6324 / JCM 9639 / NBRC 100938)).